We begin with the raw amino-acid sequence, 342 residues long: L-threonine 3-dehydrogenase (342 aa).

C38 serves as a coordination point for Zn(2+). Residues T40 and H43 each act as charge relay system in the active site. Residues H63, E64, C93, C96, C99, and C107 each contribute to the Zn(2+) site. Residues I175, D195, R200, 262–264 (LGI), and 286–287 (IY) contribute to the NAD(+) site.

This sequence belongs to the zinc-containing alcohol dehydrogenase family. In terms of assembly, homotetramer. It depends on Zn(2+) as a cofactor.

The protein localises to the cytoplasm. The enzyme catalyses L-threonine + NAD(+) = (2S)-2-amino-3-oxobutanoate + NADH + H(+). It functions in the pathway amino-acid degradation; L-threonine degradation via oxydo-reductase pathway; glycine from L-threonine: step 1/2. Its function is as follows. Catalyzes the NAD(+)-dependent oxidation of L-threonine to 2-amino-3-ketobutyrate. This is L-threonine 3-dehydrogenase from Burkholderia cenocepacia (strain ATCC BAA-245 / DSM 16553 / LMG 16656 / NCTC 13227 / J2315 / CF5610) (Burkholderia cepacia (strain J2315)).